Here is a 510-residue protein sequence, read N- to C-terminus: GMP synthase [glutamine-hydrolyzing] (510 aa).

A Glutamine amidotransferase type-1 domain is found at 5 to 195 (LVIVVDFGGQ…LFDICNLKGD (191 aa)). The active-site Nucleophile is Cys82. Catalysis depends on residues His169 and Glu171. The GMPS ATP-PPase domain maps to 196–385 (WSMSSFVDEK…LGIPHKLVWR (190 aa)). Position 223–229 (223–229 (SGGVDSS)) interacts with ATP.

In terms of assembly, homodimer.

The catalysed reaction is XMP + L-glutamine + ATP + H2O = GMP + L-glutamate + AMP + diphosphate + 2 H(+). The protein operates within purine metabolism; GMP biosynthesis; GMP from XMP (L-Gln route): step 1/1. Its function is as follows. Catalyzes the synthesis of GMP from XMP. In Clostridium kluyveri (strain NBRC 12016), this protein is GMP synthase [glutamine-hydrolyzing].